Here is a 130-residue protein sequence, read N- to C-terminus: Small ribosomal subunit protein uS11 (130 aa).

It belongs to the universal ribosomal protein uS11 family. Part of the 30S ribosomal subunit. Interacts with proteins S7 and S18. Binds to IF-3.

Functionally, located on the platform of the 30S subunit, it bridges several disparate RNA helices of the 16S rRNA. Forms part of the Shine-Dalgarno cleft in the 70S ribosome. This is Small ribosomal subunit protein uS11 from Synechococcus sp. (strain CC9902).